A 306-amino-acid chain; its full sequence is Pantothenate kinase (306 aa).

90–97 (GSVAVGKS) serves as a coordination point for ATP.

Belongs to the prokaryotic pantothenate kinase family.

It localises to the cytoplasm. It catalyses the reaction (R)-pantothenate + ATP = (R)-4'-phosphopantothenate + ADP + H(+). It participates in cofactor biosynthesis; coenzyme A biosynthesis; CoA from (R)-pantothenate: step 1/5. In Listeria monocytogenes serotype 4b (strain CLIP80459), this protein is Pantothenate kinase.